A 1216-amino-acid polypeptide reads, in one-letter code: MPKITLKGVTVDFPFQPYKCQEEYMSKVLECLQEKVNGILESPTGTGKTLCLLCSTLAWREHLRDAVSARRIAERASGELFPDRTLASWGNAIPEGDVPACYTDIPKIIYASRTHSQLTQVISELRNTSYRPRVCVLGSREQLCIHPEVKKQESNHMQVHLCRRKVASRSCHFYNNVEEKSLEQELATPILDIEDLVRSGTKHKLCPYYLSRNLKQQADIIFMPYNYLLDAKSRRAHGIDLKGTVVIFDEAHNVEKMCEEAASFDLTPHDVASELDVIDRVLEERTKVAQQAELHPEFSADSARSGLNLEPEDLAKLKMILLRLEGAIDAVELPGDNSGVTKPGSYIFELFAEAQITFQTKGCILDSLDQLIQHLAGRAGLFTNTAGLQKLVDIIQIVFSVDSAEGDPGPMVGLASQSYKVHIHLDAGHRRTAQRSDVWNTTAARKPGKVLSYWCFSPGHSMRELVRQGVRTLILTSGTLAPMASFSLEMQIPFPVCLENPHVINQHQIWVGVIPKGPDGAQLSSAFDRRFSDECLSSLGKVLSNISRVVPHGLLVFFPSYPVMEKSLEFWRARDFTRKLEVRKPLFVEPRSKGGFSEVMEAFYARVAAPESSGAIFLAVCRGKASEGLDFADVNGRGVIVTGLPYPPRMDPRVLLKMQFLDEMKAQSGAGGQFLSGHDWYRQQASRAVNQAIGRVIRHRHDYGAVFLCDHRFAHADTRAQLPSWVRPHVKVYDSFGHVIRDVAQFFRVAQKTMPEPAPRAAAPSLGEGGGIVSVSVSPGPLPTRKAMSLDVHVPSLRQRHTGSPVTKDTEGSLCVEYEQEPVRAQRRPAGLLAALGHNEQLAEGPGDEALPVEEACGCPTLLGPREKRPAEEQRGRRRKVRLVGSSEVPAASTDTGRAKLFMVAVKQALSQASFDTFTQALRDYKSSDDLEALVARLSPLFAEDPKKHSLLQGFYQFVRPHHKQQFEEVCLQLTGQGCSSPHKHGHPQRQGAQLALDSSGRKESDPKLTVSQGATRQLDPCEQLNQGRPHLASGPFPAGDLNCSLHKGSRAPGAEKQHPSTVSAYLADVRRTLGAAGYSQLLTALTTYKQDDDFEKVVAVVAALTTEKPEDLPLLQRFGMFVRPHHKQRFRQMCVDLSGPGTQAPGPQEGGPAMPSDPVCEAPSPGPRKTQSKISSFLRCQACWRQHLQVSRKCPGCCAATRKQTLAQVFWPEPQ.

Residues 7–295 (KGVTVDFPFQ…TKVAQQAELH (289 aa)) enclose the Helicase ATP-binding domain. 42 to 49 (SPTGTGKT) contacts ATP. Cys-144, Cys-162, Cys-171, and Cys-206 together coordinate [4Fe-4S] cluster. Positions 150-166 (KKQESNHMQVHLCRRKV) match the Nuclear localization signal motif. The DEAH box signature appears at 249–252 (DEAH). A Nuclear localization signal motif is present at residues 874–880 (QRGRRRK). Disordered stretches follow at residues 978–1018 (GCSS…ATRQ) and 1140–1172 (GPGT…RKTQ). The PIP-box motif lies at 1172–1179 (QSKISSFL).

The protein belongs to the helicase family. RAD3/XPD subfamily. Interacts with TERF1. Interacts (via PIP-box) with PCNA; the interaction is direct and essential for suppressing telomere fragility. Interacts with MMS19; the interaction mediates the association of RTEL1 with the cytosolic iron-sulfur protein assembly (CIA) complex. Highly expressed in adult testis, liver and ovary.

It is found in the nucleus. It catalyses the reaction ATP + H2O = ADP + phosphate + H(+). A probable ATP-dependent DNA helicase implicated in telomere-length regulation, DNA repair and the maintenance of genomic stability. Acts as an anti-recombinase to counteract toxic recombination and limit crossover during meiosis. Regulates meiotic recombination and crossover homeostasis by physically dissociating strand invasion events and thereby promotes noncrossover repair by meiotic synthesis dependent strand annealing (SDSA) as well as disassembly of D loop recombination intermediates. Also disassembles T loops and prevents telomere fragility by counteracting telomeric G4-DNA structures, which together ensure the dynamics and stability of the telomere. This chain is Regulator of telomere elongation helicase 1, found in Bos taurus (Bovine).